Reading from the N-terminus, the 1043-residue chain is Glutamate receptor ionotropic, NMDA 3B (1043 aa).

A signal peptide spans 1–22 (MEFVRALWLGLALALGPGSAGG). Residues 23–574 (HPQPCGVLAR…PIGAFMWPLH (552 aa)) are Extracellular-facing. N-linked (GlcNAc...) asparagine glycosylation is found at Asn-69, Asn-344, Asn-451, and Asn-465. 2 cysteine pairs are disulfide-bonded: Cys-439/Cys-475 and Cys-445/Cys-476. Glycine contacts are provided by Ser-531, Ser-533, and Arg-538. D-serine contacts are provided by Ser-533 and Arg-538. A helical membrane pass occupies residues 575 to 594 (WSTWLGVFAALHLTALFLTV). Over 595–615 (YEWRSPYGLTPRGRNRSTVFS) the chain is Cytoplasmic. The segment at residues 616-627 (YSSALNLCYAIL) is an intramembrane region (discontinuously helical). Residues 628–641 (FRRTVSSKTPKCPT) are Cytoplasmic-facing. A helical membrane pass occupies residues 642-661 (GRLLMNLWAIFCLLVLSSYT). The Extracellular segment spans residues 662–832 (ANLAAVMVGD…TLQMSIYHFA (171 aa)). Ser-701 contacts glycine. The D-serine site is built by Ser-701, Ala-702, and Asp-745. Residue Asp-745 coordinates glycine. The N-linked (GlcNAc...) asparagine glycan is linked to Asn-786. The helical transmembrane segment at 833–848 (GLFVLLCLGLGSALLS) threads the bilayer. Residues 849–1043 (SLGEHAFFRL…PHSGRPGSQE (195 aa)) lie on the Cytoplasmic side of the membrane. 2 disordered regions span residues 882–924 (ALNT…WKRA) and 1012–1043 (GDSA…GSQE). The interval 979–1012 (QPGELQELERRIEVARERLRQALVRRGQLLAQLG) is involved in the trafficking and surface expression of NMDARs. Low complexity predominate over residues 1024-1035 (QARAAPAEAPPH).

The protein belongs to the glutamate-gated ion channel (TC 1.A.10.1) family. NR3B/GRIN3B subfamily. As to quaternary structure, forms heterotetrameric channels that contain at least two GluN1 subunits and at least a combination of one GluN2 and one GluN3 subunits (in vitro). Forms heterotetrameric channels composed of two GluN1/zeta subunits (GRIN1), and two identical GluN3 subunits (GRIN3A or GRIN3B) (in vitro). Does not form functional homomeric channels.

It localises to the cell membrane. Its subcellular location is the postsynaptic cell membrane. The catalysed reaction is Ca(2+)(in) = Ca(2+)(out). It carries out the reaction Na(+)(in) = Na(+)(out). Functionally, component of a non-conventional N-methyl-D-aspartate (NMDA) receptors (NMDARs) that function as heterotetrameric, ligand-gated cation channels with low calcium permeability and low voltage-dependent block by Mg(2+). Forms glutamatergic receptor complexes with GluN1 and GluN2 subunits which are activated by glycine binding to the GluN1 and GluN3 subunits and L-glutamate binding to GluN2 subunits. Forms excitatory glycinergic receptor complexes with GluN1 alone which are activated by glycine binding to the GluN1 and GluN3 subunits. GluN3B subunit also binds D-serine and, in the absence of glycine, activates glycinergic receptor complexes, but with lower efficacy than glycine. Each GluN3 subunit confers differential attributes to channel properties, including activation, deactivation and desensitization kinetics, pH sensitivity, Ca2(+) permeability, and binding to allosteric modulators. This is Glutamate receptor ionotropic, NMDA 3B from Homo sapiens (Human).